The following is a 198-amino-acid chain: Recombination protein RecR (198 aa).

The C4-type zinc finger occupies 56-71 (CTTCGNIDTHDPCAIC). A Toprim domain is found at 79–174 (RSLCVVEEVS…RLTQLAHGLP (96 aa)).

The protein belongs to the RecR family.

Functionally, may play a role in DNA repair. It seems to be involved in an RecBC-independent recombinational process of DNA repair. It may act with RecF and RecO. This chain is Recombination protein RecR, found in Sphingopyxis alaskensis (strain DSM 13593 / LMG 18877 / RB2256) (Sphingomonas alaskensis).